Consider the following 229-residue polypeptide: Lantibiotic transport ATP-binding protein SrtF (229 aa).

The ABC transporter domain maps to 2-225; that stretch reads LKIQNLKKSY…EELFNNQILF (224 aa). 34-41 lines the ATP pocket; sequence GPNGAGKS.

This sequence belongs to the ABC transporter superfamily.

Functionally, implicated in the export process of the lantibiotic SrtA. This chain is Lantibiotic transport ATP-binding protein SrtF (srtF), found in Streptococcus pyogenes serotype M1.